Here is a 196-residue protein sequence, read N- to C-terminus: Thymidine kinase (196 aa).

ATP is bound at residue 17–24 (GPMFAGKT). Glu92 functions as the Proton acceptor in the catalytic mechanism. Phe121 is a binding site for substrate. Cys146 and Cys149 together coordinate Zn(2+). Residue 166–170 (LILAG) participates in substrate binding. The Zn(2+) site is built by Cys179 and Cys182.

Belongs to the thymidine kinase family.

It carries out the reaction thymidine + ATP = dTMP + ADP + H(+). Functionally, phosphorylates thymidine. ASFV replicates in the cytoplasm of infected cells and contains genes encoding a number of enzymes needed for DNA synthesis, including thymidine kinase. Important for growth in swine macrophages in vitro and is a virus virulence factor in swine. This chain is Thymidine kinase, found in African swine fever virus (strain Badajoz 1971 Vero-adapted) (Ba71V).